Here is a 240-residue protein sequence, read N- to C-terminus: UPF0173 metal-dependent hydrolase OE_2513F (240 aa).

It belongs to the UPF0173 family.

This Halobacterium salinarum (strain ATCC 29341 / DSM 671 / R1) protein is UPF0173 metal-dependent hydrolase OE_2513F.